The chain runs to 487 residues: Protein nucleotidyltransferase YdiU (487 aa).

8 residues coordinate ATP: Gly85, Gly87, Arg88, Lys108, Asp120, Gly121, Arg171, and Arg178. The Proton acceptor role is filled by Asp247. Residues Asn248 and Asp257 each coordinate Mg(2+). Residue Asp257 participates in ATP binding.

This sequence belongs to the SELO family. The cofactor is Mg(2+). It depends on Mn(2+) as a cofactor.

It carries out the reaction L-seryl-[protein] + ATP = 3-O-(5'-adenylyl)-L-seryl-[protein] + diphosphate. It catalyses the reaction L-threonyl-[protein] + ATP = 3-O-(5'-adenylyl)-L-threonyl-[protein] + diphosphate. The enzyme catalyses L-tyrosyl-[protein] + ATP = O-(5'-adenylyl)-L-tyrosyl-[protein] + diphosphate. The catalysed reaction is L-histidyl-[protein] + UTP = N(tele)-(5'-uridylyl)-L-histidyl-[protein] + diphosphate. It carries out the reaction L-seryl-[protein] + UTP = O-(5'-uridylyl)-L-seryl-[protein] + diphosphate. It catalyses the reaction L-tyrosyl-[protein] + UTP = O-(5'-uridylyl)-L-tyrosyl-[protein] + diphosphate. Functionally, nucleotidyltransferase involved in the post-translational modification of proteins. It can catalyze the addition of adenosine monophosphate (AMP) or uridine monophosphate (UMP) to a protein, resulting in modifications known as AMPylation and UMPylation. This chain is Protein nucleotidyltransferase YdiU, found in Agrobacterium fabrum (strain C58 / ATCC 33970) (Agrobacterium tumefaciens (strain C58)).